Consider the following 116-residue polypeptide: MRHNHGYRKLGRTSAHRKALLKNLAIALVENQKIETTVIKAKELQSYIEKLITKASEGSFNAHRAVFAHLQDKNATNKLVVEIAPKYSDRKGGYTRIVRTRLRKGDAAPLAFIELI.

Belongs to the bacterial ribosomal protein bL17 family. As to quaternary structure, part of the 50S ribosomal subunit. Contacts protein L32.

The chain is Large ribosomal subunit protein bL17 from Wolinella succinogenes (strain ATCC 29543 / DSM 1740 / CCUG 13145 / JCM 31913 / LMG 7466 / NCTC 11488 / FDC 602W) (Vibrio succinogenes).